The primary structure comprises 387 residues: tRNA pseudouridine synthase B (387 aa).

Asp-43 functions as the Nucleophile in the catalytic mechanism.

This sequence belongs to the pseudouridine synthase TruB family. Type 1 subfamily.

It catalyses the reaction uridine(55) in tRNA = pseudouridine(55) in tRNA. In terms of biological role, responsible for synthesis of pseudouridine from uracil-55 in the psi GC loop of transfer RNAs. This is tRNA pseudouridine synthase B from Bifidobacterium longum (strain NCC 2705).